A 366-amino-acid polypeptide reads, in one-letter code: Carbamoyl phosphate synthase small chain (366 aa).

Residues 1–172 (MYGILVLEDG…TYNAENEKTS (172 aa)) form a CPSase region. Residues serine 45, glycine 220, and glycine 222 each contribute to the L-glutamine site. The Glutamine amidotransferase type-1 domain occupies 172 to 363 (SCVLIDCGVK…VELGIKFKAE (192 aa)). Cysteine 247 acts as the Nucleophile in catalysis. Residues leucine 248, glutamine 251, asparagine 289, glycine 291, and phenylalanine 292 each coordinate L-glutamine. Catalysis depends on residues histidine 336 and glutamate 338.

It belongs to the CarA family. Composed of two chains; the small (or glutamine) chain promotes the hydrolysis of glutamine to ammonia, which is used by the large (or ammonia) chain to synthesize carbamoyl phosphate. Tetramer of heterodimers (alpha,beta)4.

The catalysed reaction is hydrogencarbonate + L-glutamine + 2 ATP + H2O = carbamoyl phosphate + L-glutamate + 2 ADP + phosphate + 2 H(+). It catalyses the reaction L-glutamine + H2O = L-glutamate + NH4(+). The protein operates within amino-acid biosynthesis; L-arginine biosynthesis; carbamoyl phosphate from bicarbonate: step 1/1. It participates in pyrimidine metabolism; UMP biosynthesis via de novo pathway; (S)-dihydroorotate from bicarbonate: step 1/3. In terms of biological role, small subunit of the glutamine-dependent carbamoyl phosphate synthetase (CPSase). CPSase catalyzes the formation of carbamoyl phosphate from the ammonia moiety of glutamine, carbonate, and phosphate donated by ATP, constituting the first step of 2 biosynthetic pathways, one leading to arginine and/or urea and the other to pyrimidine nucleotides. The small subunit (glutamine amidotransferase) binds and cleaves glutamine to supply the large subunit with the substrate ammonia. This is Carbamoyl phosphate synthase small chain from Methanococcus maripaludis (strain C7 / ATCC BAA-1331).